Reading from the N-terminus, the 255-residue chain is Geranylgeranylglyceryl phosphate synthase (255 aa).

Mg(2+) contacts are provided by aspartate 31 and serine 60. Sn-glycerol 1-phosphate contacts are provided by residues 179-185 (YLEAGSG), 211-212 (GG), and 233-234 (GT).

It belongs to the GGGP/HepGP synthase family. Group II subfamily. Mg(2+) is required as a cofactor.

The protein resides in the cytoplasm. The enzyme catalyses sn-glycerol 1-phosphate + (2E,6E,10E)-geranylgeranyl diphosphate = sn-3-O-(geranylgeranyl)glycerol 1-phosphate + diphosphate. The protein operates within membrane lipid metabolism; glycerophospholipid metabolism. Its function is as follows. Prenyltransferase that catalyzes the transfer of the geranylgeranyl moiety of geranylgeranyl diphosphate (GGPP) to the C3 hydroxyl of sn-glycerol-1-phosphate (G1P). This reaction is the first ether-bond-formation step in the biosynthesis of archaeal membrane lipids. The polypeptide is Geranylgeranylglyceryl phosphate synthase (Methanothrix thermoacetophila (strain DSM 6194 / JCM 14653 / NBRC 101360 / PT) (Methanosaeta thermophila)).